The primary structure comprises 115 residues: uncharacterized protein (115 aa).

This is an uncharacterized protein from Spirochaeta aurantia.